A 929-amino-acid polypeptide reads, in one-letter code: Isoleucine--tRNA ligase (929 aa).

The 'HIGH' region motif lies at 58–68 (PYANGDIHIGH). Residue glutamate 563 participates in L-isoleucyl-5'-AMP binding. The 'KMSKS' region motif lies at 605-609 (KMSKS). Lysine 608 contributes to the ATP binding site. Cysteine 892, cysteine 895, cysteine 912, and cysteine 915 together coordinate Zn(2+).

It belongs to the class-I aminoacyl-tRNA synthetase family. IleS type 1 subfamily. In terms of assembly, monomer. The cofactor is Zn(2+).

It is found in the cytoplasm. The enzyme catalyses tRNA(Ile) + L-isoleucine + ATP = L-isoleucyl-tRNA(Ile) + AMP + diphosphate. Its function is as follows. Catalyzes the attachment of isoleucine to tRNA(Ile). As IleRS can inadvertently accommodate and process structurally similar amino acids such as valine, to avoid such errors it has two additional distinct tRNA(Ile)-dependent editing activities. One activity is designated as 'pretransfer' editing and involves the hydrolysis of activated Val-AMP. The other activity is designated 'posttransfer' editing and involves deacylation of mischarged Val-tRNA(Ile). The polypeptide is Isoleucine--tRNA ligase (Neisseria meningitidis serogroup A / serotype 4A (strain DSM 15465 / Z2491)).